We begin with the raw amino-acid sequence, 155 residues long: uncharacterized protein (155 aa).

The signal sequence occupies residues 1-23 (MTILSLSRFMLAGVLLASFNASA).

This sequence to E.coli YfjT.

This is an uncharacterized protein from Escherichia coli (strain K12).